Here is a 31-residue protein sequence, read N- to C-terminus: AFCNLRRCELSCRSLGLLGKCIGEECKCVPH.

Cystine bridges form between C3-C21, C8-C26, and C12-C28. A [R/K]XCQ motif region spans residues 6–9; the sequence is RRCE. Position 31 is a histidine amide (H31).

Expressed by the venom gland.

The protein resides in the secreted. Blocks small conductance calcium-activated potassium channels. This is Potassium channel toxin alpha-KTx 5.5 from Hottentotta tamulus (Eastern Indian scorpion).